Reading from the N-terminus, the 597-residue chain is Probable translation initiation factor IF-2 (597 aa).

In terms of domain architecture, tr-type G spans 10-226; the sequence is LRTPIVAVLG…LMGLSQRFMK (217 aa). Residues 19–26 are G1; the sequence is GHVDHGKT. 19–26 is a binding site for GTP; it reads GHVDHGKT. A G2 region spans residues 44–48; that stretch reads AITQH. The segment at 81–84 is G3; sequence DTPG. Residues 81 to 85 and 135 to 138 each bind GTP; these read DTPGH and NKVD. Residues 135–138 form a G4 region; it reads NKVD. The tract at residues 203-205 is G5; the sequence is SAI.

This sequence belongs to the TRAFAC class translation factor GTPase superfamily. Classic translation factor GTPase family. IF-2 subfamily.

Function in general translation initiation by promoting the binding of the formylmethionine-tRNA to ribosomes. Seems to function along with eIF-2. The protein is Probable translation initiation factor IF-2 of Halorubrum lacusprofundi (strain ATCC 49239 / DSM 5036 / JCM 8891 / ACAM 34).